A 309-amino-acid polypeptide reads, in one-letter code: Calcium homeostasis modulator protein 5 (309 aa).

Over 1–15 (MDAFQSILKFFLNQK) the chain is Cytoplasmic. The helical transmembrane segment at 16 to 37 (TAIGYSFMALLTVGSERLFSLV) threads the bilayer. Positions 32 and 37 each coordinate a 1,2-diacyl-sn-glycero-3-phosphate. The Extracellular portion of the chain corresponds to 38-45 (AFKCPCSV). Cystine bridges form between Cys-41-Cys-127, Cys-43-Cys-158, and Cys-142-Cys-149. The helical transmembrane segment at 46 to 70 (ENTAYGLVFLFAPAWVLLILGFFLN) threads the bilayer. At 71 to 99 (NKAWRLFTGCCMNPKKIFPRRRCCRFFYV) the chain is on the cytoplasmic side. The helical transmembrane segment at 100 to 129 (LGHIILSSLVAPVMWLSVALLNGTFYECAM) threads the bilayer. Residue Asn-121 coordinates a 1,2-diacyl-sn-glycero-3-phosphate. Topologically, residues 130-174 (SGTRSTRLLEMICKGKPKECWEELHKVSCGKSSMAAMESEEVRLS) are extracellular. Residues 175 to 200 (LQAQSQILGWCLICSASFLSLLTTCY) traverse the membrane as a helical segment. The Cytoplasmic segment spans residues 201 to 309 (ARCRSKVSYL…MILVGTAQSL (109 aa)). Arg-202 serves as a coordination point for a 1,2-diacyl-sn-glycero-3-phosphate.

The protein belongs to the CALHM family. Oligomerizes to form undecameric cone-shaped channels.

The protein resides in the membrane. Its function is as follows. May assemble to form large pore channels with gating and ion conductance likely regulated by membrane lipids. The polypeptide is Calcium homeostasis modulator protein 5 (Mus musculus (Mouse)).